Reading from the N-terminus, the 348-residue chain is Dihydroorotase (348 aa).

His17 and His19 together coordinate Zn(2+). Substrate-binding positions include 19–21 (HLR) and Asn45. Positions 103, 140, and 178 each coordinate Zn(2+). Lys103 is subject to N6-carboxylysine. His140 serves as a coordination point for substrate. Position 223 (Leu223) interacts with substrate. Asp251 provides a ligand contact to Zn(2+). Asp251 is an active-site residue. Residues His255 and Ala267 each coordinate substrate.

Belongs to the metallo-dependent hydrolases superfamily. DHOase family. Class II DHOase subfamily. As to quaternary structure, homodimer. Zn(2+) is required as a cofactor.

The enzyme catalyses (S)-dihydroorotate + H2O = N-carbamoyl-L-aspartate + H(+). Its pathway is pyrimidine metabolism; UMP biosynthesis via de novo pathway; (S)-dihydroorotate from bicarbonate: step 3/3. Catalyzes the reversible cyclization of carbamoyl aspartate to dihydroorotate. This is Dihydroorotase from Escherichia coli (strain UTI89 / UPEC).